The chain runs to 361 residues: AP2/ERF and B3 domain-containing transcription repressor TEM1 (361 aa).

The tract at residues 1–73 (MEYSCVDDSS…SRKLPSSKYK (73 aa)) is disordered. Residues 9–27 (SSTTSESLSISTTPKPTTT) are compositionally biased toward low complexity. The AP2/ERF DNA-binding region spans 71–126 (KYKGVVPQPNGRWGAQIYEKHQRVWLGTFNEEEEAASSYDIAVRRFRGRDAVTNFK). Positions 195-306 (FEKTVTPSDV…QLYIHWKVRS (112 aa)) form a DNA-binding region, TF-B3.

Belongs to the AP2/ERF transcription factor family. RAV subfamily. As to quaternary structure, interacts with FT. Expressed in leaves.

It localises to the nucleus. Functionally, transcriptional repressor of flowering time on long day plants. Acts directly on FT expression by binding 5'-CAACA-3' and 5'-CACCTG-3 sequences. Functionally redundant with TEM2. This is AP2/ERF and B3 domain-containing transcription repressor TEM1 (TEM1) from Arabidopsis thaliana (Mouse-ear cress).